Here is a 779-residue protein sequence, read N- to C-terminus: Lon protease (779 aa).

The Lon N-terminal domain occupies 7-190; sequence VPVLFLNDSI…LLIGWTGDHL (184 aa). 352-359 serves as a coordination point for ATP; that stretch reads GPPGVGKT. A Lon proteolytic domain is found at 589–769; sequence TAVPGVATGL…ADIIAAALEP (181 aa). Active-site residues include Ser675 and Lys718.

This sequence belongs to the peptidase S16 family. Homohexamer. Organized in a ring with a central cavity. Oligomerization is Mg(2+)-dependent.

The protein resides in the cytoplasm. The enzyme catalyses Hydrolysis of proteins in presence of ATP.. Its activity is regulated as follows. Stimulated by unfolded protein. ATP-dependent serine protease that mediates the selective degradation of mutant and abnormal proteins as well as certain short-lived regulatory proteins. Required for cellular homeostasis and for survival from DNA damage and developmental changes induced by stress. Degrades polypeptides processively to yield small peptide fragments that are 5 to 10 amino acids long. Binds to DNA in a double-stranded, site-specific manner. This chain is Lon protease, found in Mycolicibacterium smegmatis (Mycobacterium smegmatis).